The sequence spans 118 residues: Large ribosomal subunit protein bL19 (118 aa).

The protein belongs to the bacterial ribosomal protein bL19 family.

Functionally, this protein is located at the 30S-50S ribosomal subunit interface and may play a role in the structure and function of the aminoacyl-tRNA binding site. This is Large ribosomal subunit protein bL19 from Onion yellows phytoplasma (strain OY-M).